Consider the following 530-residue polypeptide: MARLCTHTESGHYLMALDAGTGSVRAVIFDLQGKQIAVGQAEWQHLAVPDVPGSMEFDLAKNWQLACQCIRQALQKAAIPATAIAAVSACSMRESIVIYDSNGEPIWACANVDARAAHEVSELKELHDNTFEEEVYRCSGQTLALSAIPRLLWLAHHRPDIYHRASTVTMISDWMAFMLSGELAVDPSNAGTTGLLDLVTRNWKRSLLQMAGLRSDILSPVKETGTLLGHISQKAAEQCDLQAGTPVIVGGGDVQLGCLGLGVVRPAQTAVLGGTFWQQVVNLPAPVTDPNMNVRINPHVIPGMVQTESISFFTGLTMRWFRDAFCAEEKLIAERLGIDAYSLLEDMASRVPPGAYGVMPIFSDVMRFKRWYHAAPSFINLSIDPEKCNKATLFRALEENAAIVSACNLQQIAAFSGVQADSLVFAGGGSKGKLWSQILADVTGLTVHVPVVKEATALGCAIAAGVGVGIWPSLAETGEKLVRWDREHKPNPENFAVYQQAREKWQAVYQDQRALVDGGLTTSLWKAPGL.

Belongs to the FGGY kinase family.

It is found in the cytoplasm. The catalysed reaction is (S)-4,5-dihydroxypentane-2,3-dione + ATP = (2S)-2-hydroxy-3,4-dioxopentyl phosphate + ADP + H(+). Functionally, catalyzes the phosphorylation of autoinducer-2 (AI-2) to phospho-AI-2, which subsequently inactivates the transcriptional regulator LsrR and leads to the transcription of the lsr operon. Phosphorylates the ring-open form of (S)-4,5-dihydroxypentane-2,3-dione (DPD), which is the precursor to all AI-2 signaling molecules, at the C5 position. The protein is Autoinducer-2 kinase of Salmonella choleraesuis (strain SC-B67).